The sequence spans 442 residues: Urokinase-type plasminogen activator (442 aa).

A signal peptide spans 1-20; it reads MRVLRACLSLCVLVVSDSKG. The EGF-like domain occupies 29–65; the sequence is GASNCGCLNGGKCVSYKYFSNIQRCSCPKKFQGEHCE. Intrachain disulfides connect cysteine 33–cysteine 41, cysteine 35–cysteine 53, cysteine 55–cysteine 64, cysteine 72–cysteine 153, cysteine 93–cysteine 135, cysteine 124–cysteine 148, cysteine 179–cysteine 310, cysteine 220–cysteine 236, cysteine 228–cysteine 299, cysteine 324–cysteine 393, cysteine 356–cysteine 372, and cysteine 383–cysteine 411. The segment at 36 to 59 is binds urokinase plasminogen activator surface receptor; sequence LNGGKCVSYKYFSNIQRCSCPKKF. The 82-residue stretch at 72–153 folds into the Kringle domain; the sequence is CFEGNGHSYR…LVQECMVPNC (82 aa). Asparagine 152 carries N-linked (GlcNAc...) asparagine glycosylation. A connecting peptide region spans residues 154–189; the sequence is SGGESHRPAYDGKNPFSTPEKVEFQCGQKALRPRFK. Residues 190-435 form the Peptidase S1 domain; that stretch reads IVGGKSTTIE…FLTWIHTHVG (246 aa). Residues histidine 235 and aspartate 286 each act as charge relay system in the active site. Serine 387 acts as the Charge relay system in catalysis.

The protein belongs to the peptidase S1 family. In terms of assembly, found in high and low molecular mass forms. Each consists of two chains, A and B. The high molecular mass form contains a long chain A which is cleaved to yield a short chain A. Forms heterodimer with SERPINA5. Binds LRP1B; binding is followed by internalization and degradation. Interacts with MRC2. Interacts with PLAUR. In complex with SERPINE1, interacts with PLAUR/uPAR. Interacts with SORL1 and LRP1, either alone or in complex with SERPINE1; these interactions are abolished in the presence of LRPAP1/RAP. The ternary complex composed of PLAUR-PLAU-PAI1 also interacts with SORLA. In terms of processing, produced as an inactive single-chain protein (pro-uPA or sc-uPA), is processed into the active disulfide-linked two-chain form of PLAU/uPA by a proteolytic event mediated, at least, by TMPRSS4.

It localises to the secreted. It catalyses the reaction Specific cleavage of Arg-|-Val bond in plasminogen to form plasmin.. Inhibited by SERPINA5. Inhibited by SERPINE1. Specifically cleaves the zymogen plasminogen to form the active enzyme plasmin. This Sus scrofa (Pig) protein is Urokinase-type plasminogen activator (PLAU).